The sequence spans 190 residues: Prostaglandin-H2 D-isomerase (190 aa).

Residues 1-22 (MATHHTLWMGLALLGVLGDLQA) form the signal peptide. An O-linked (GalNAc...) serine glycan is attached at Ser-29. N-linked (GlcNAc...) (complex) asparagine glycosylation is present at Asn-51. Cys-65 serves as the catalytic Nucleophile. Asn-78 carries N-linked (GlcNAc...) (complex) asparagine glycosylation. A disulfide bond links Cys-89 and Cys-186.

It belongs to the calycin superfamily. Lipocalin family. Monomer. Post-translationally, N- and O-glycosylated. Both N-glycosylation recognition sites are almost quantitatively occupied by N-glycans of the biantennary complex type, with a considerable proportion of structures bearing a bisecting GlcNAc. N-glycan at Asn-78: dHex1Hex5HexNAc4. Agalacto structure as well as sialylated and nonsialylated oligosaccharides bearing alpha2-3- and/or alpha2-6-linked NeuNAc are present. Abundant in the brain and CNS, where it is expressed in tissues of the blood-brain barrier and secreted into the cerebro-spinal fluid. Abundantly expressed in the heart. In the male reproductive system, it is expressed in the testis, epididymis and prostate, and is secreted into the seminal fluid. Expressed in the eye and secreted into the aqueous humor. Lower levels detected in various tissue fluids such as serum, normal urine, ascitic fluid and tear fluid. Also found in a number of other organs including ovary, fimbriae of the fallopian tubes, kidney, leukocytes.

The protein resides in the rough endoplasmic reticulum. It localises to the nucleus membrane. Its subcellular location is the golgi apparatus. It is found in the cytoplasm. The protein localises to the perinuclear region. The protein resides in the secreted. The catalysed reaction is prostaglandin H2 = prostaglandin D2. In terms of biological role, catalyzes the conversion of PGH2 to PGD2, a prostaglandin involved in smooth muscle contraction/relaxation and a potent inhibitor of platelet aggregation. Involved in a variety of CNS functions, such as sedation, NREM sleep and PGE2-induced allodynia, and may have an anti-apoptotic role in oligodendrocytes. Binds small non-substrate lipophilic molecules, including biliverdin, bilirubin, retinal, retinoic acid and thyroid hormone, and may act as a scavenger for harmful hydrophobic molecules and as a secretory retinoid and thyroid hormone transporter. Possibly involved in development and maintenance of the blood-brain, blood-retina, blood-aqueous humor and blood-testis barrier. It is likely to play important roles in both maturation and maintenance of the central nervous system and male reproductive system. Involved in PLA2G3-dependent maturation of mast cells. PLA2G3 is secreted by immature mast cells and acts on nearby fibroblasts upstream to PTDGS to synthesize PGD2, which in turn promotes mast cell maturation and degranulation via PTGDR. In Homo sapiens (Human), this protein is Prostaglandin-H2 D-isomerase (PTGDS).